Here is a 477-residue protein sequence, read N- to C-terminus: Glutamyl-tRNA reductase (477 aa).

Substrate-binding positions include 49 to 52 (TCNR), serine 109, 114 to 116 (EGQ), and glutamine 120. Cysteine 50 (nucleophile) is an active-site residue. 221-226 (GAGSMS) is a binding site for NADP(+).

The protein belongs to the glutamyl-tRNA reductase family. As to quaternary structure, homodimer.

It catalyses the reaction (S)-4-amino-5-oxopentanoate + tRNA(Glu) + NADP(+) = L-glutamyl-tRNA(Glu) + NADPH + H(+). It functions in the pathway porphyrin-containing compound metabolism; protoporphyrin-IX biosynthesis; 5-aminolevulinate from L-glutamyl-tRNA(Glu): step 1/2. Its function is as follows. Catalyzes the NADPH-dependent reduction of glutamyl-tRNA(Glu) to glutamate 1-semialdehyde (GSA). This is Glutamyl-tRNA reductase from Thermobifida fusca (strain YX).